The following is a 107-amino-acid chain: Phosphoribosyl-ATP pyrophosphatase (107 aa).

This sequence belongs to the PRA-PH family.

It is found in the cytoplasm. It carries out the reaction 1-(5-phospho-beta-D-ribosyl)-ATP + H2O = 1-(5-phospho-beta-D-ribosyl)-5'-AMP + diphosphate + H(+). The protein operates within amino-acid biosynthesis; L-histidine biosynthesis; L-histidine from 5-phospho-alpha-D-ribose 1-diphosphate: step 2/9. This Neisseria gonorrhoeae (strain ATCC 700825 / FA 1090) protein is Phosphoribosyl-ATP pyrophosphatase.